We begin with the raw amino-acid sequence, 690 residues long: MMLNKKVVALCTLTLHLFCIFLCLGKEVRSEENGKIQDDAKKIVSELRFLEKVEDVIEKSNIGGNEVDADENSFNPDTEVPIEEIEEIKMRELKDVKEEKNKNDNHNNNNNNNNISSSSSSSSNTFGEEKEEVSKKKKKLRLIVSENHATTPSFFQESLLEPDVLSFLESKGNLSNLKNINSMIIELKEDTTDDELISYIKILEEKGALIESDKLVSADNIDISGIKDAIRRGEENIDVNDYKSMLEVENDAEDYDKMFGMFNESHAATSKRKRHSTNERGYDTFSSPSYKTYSKSDYLYDDDNNNNNYYYSHSSNGHNSSSRNSSSSRSRPGKYHFNDEFRNLQWGLDLSRLDETQELINEHQVMSTRICVIDSGIDYNHPDLKDNIELNLKELHGRKGFDDDNNGIVDDIYGANFVNNSGNPMDDNYHGTHVSGIISAIGNNNIGVVGVDVNSKLIICKALDEHKLGRLGDMFKCLDYCISRNAHMINGSFSFDEYSGIFNSSVEYLQRKGILFFVSASNCSHPKSSTPDIRKCDLSINAKYPPILSTVYDNVISVANLKKNDNNNHYSLSINSFYSNKYCQLAAPGTNIYSTAPHNSYRKLNGTSMAAPHVAAIASLIFSINPDLSYKKVIQILKDSIVYLPSLKNMVAWAGYADINKAVNLAIKSKKTYINSNISNKWKKKSRYLH.

Positions 1-25 (MMLNKKVVALCTLTLHLFCIFLCLG) are cleaved as a signal peptide. The propeptide at 26–219 (KEVRSEENGK…IESDKLVSAD (194 aa)) is inhibition peptide. The interval 99–131 (EKNKNDNHNNNNNNNNISSSSSSSSNTFGEEKE) is disordered. A compositionally biased stretch (low complexity) spans 106 to 124 (HNNNNNNNNISSSSSSSSN). Asparagine 114 carries an N-linked (GlcNAc...) asparagine glycan. 3 residues coordinate Ca(2+): asparagine 147, threonine 150, and proline 152. Asparagine 173 carries N-linked (GlcNAc...) asparagine glycosylation. Glycine 207 contacts Ca(2+). Asparagine 263 is a glycosylation site (N-linked (GlcNAc...) asparagine). 2 disordered regions span residues 266–286 (HAATSKRKRHSTNERGYDTFS) and 305–334 (NNNNYYYSHSSNGHNSSSRNSSSSRSRPGK). Positions 305–330 (NNNNYYYSHSSNGHNSSSRNSSSSRS) are enriched in low complexity. Residues asparagine 319 and asparagine 324 are each glycosylated (N-linked (GlcNAc...) asparagine). Glutamate 340 provides a ligand contact to Ca(2+). One can recognise a Peptidase S8 domain in the interval 345 to 663 (QWGLDLSRLD…AGYADINKAV (319 aa)). 2 disulfides stabilise this stretch: cysteine 371–cysteine 481 and cysteine 460–cysteine 477. Aspartate 374 acts as the Charge relay system in catalysis. Ca(2+) is bound by residues aspartate 383, glutamate 394, arginine 398, phenylalanine 401, aspartate 402, aspartate 403, aspartate 404, asparagine 406, isoleucine 408, aspartate 410, and aspartate 411. Residue asparagine 419 is glycosylated (N-linked (GlcNAc...) asparagine). Histidine 430 (charge relay system) is an active-site residue. Ca(2+)-binding residues include isoleucine 441, asparagine 444, isoleucine 446, and valine 448. N-linked (GlcNAc...) asparagine glycosylation is found at asparagine 490, asparagine 503, and asparagine 522. The cysteines at positions 523 and 536 are disulfide-linked. Asparagine 605 is a glycosylation site (N-linked (GlcNAc...) asparagine). Serine 608 (charge relay system) is an active-site residue. Asparagine 677 carries N-linked (GlcNAc...) asparagine glycosylation.

This sequence belongs to the peptidase S8 family. Heterodimer between p54 form and prodomain p31; the interaction inhibits p54 catalytic activity. Heterodimer p31-p54 is monomeric at basic pH and dimeric at acidic pH; dimerization is driven by the N-terminal prodomain (p31). Ca(2+) is required as a cofactor. Post-translationally, the prodomain (p31) is cleaved, probably by autocatalysis, during the transport to or in the Golgi apparatus, and remains non-covalently associated with the p54 form as an inhibitor. p54 is further cleaved into the p47 form. This cleavage is likely occurring in the exoneme prior to egress and is mediated by PMX/plasmepsin X. The p54-to-p47 conversion can be also autocatalytic. Heterodimer p31-p54 is activated by cleavage of prodomain (p31) by the aspartic protease PMX; cleavage by PMX abolishes inhibitory capacity of p31. Primary autocatalytic processing of SUB1 is essential for parasite growth; the p54-to-p47 conversion is dispensable for SUB1 functions in the parasites. The disulfide bond between Cys-523 and Cys-536 acts as a redox-sensitive disulfide switch. The oxidized form is required for catalytic activity. In terms of processing, the relevance of N-glycosylation is not clear. In an insect expression system, SUB1 glycosylation appears to affect its processing into the active mature form suggesting that SUB1 may not be N-glycosylated in parasites.

The protein resides in the secreted. The protein localises to the parasitophorous vacuole lumen. The enzyme catalyses Hydrolysis of proteins with broad specificity for peptide bonds, and a preference for a large uncharged residue in P1. Hydrolyzes peptide amides.. With respect to regulation, p54 and probably p47 forms are inhibited by the non-covalent interaction with the cleaved propeptide. Inhibited by subtilisin propeptide-like protein SUB1-ProM. Inhibited by 3,4-dichloroisocoumarin (DCI) and 4-(hydroxymercuri)benzoic acid (pHMB). Partially inhibited by chymostatin, leupeptin, phenylmethylsulfonyl fluoride (PMSF), and 4-(2-aminoethyl)benzenesulfonyl fluoride. Its function is as follows. Serine protease which plays an essential role in merozoite invasion of and egress from host erythrocytes by processing and activating various merozoite surface and parasitophorous vacuole proteins. Mediates the proteolytic maturation of serine proteases SERA4, SERA5 and SERA6 just prior to merozoite egress. Prior to merozoite egress, cleaves merozoite surface proteins MSP1, MSP6 and MSP7, which form the MSP1/6/7 complex, and thereby may prime the parasite cell surface for invasion of fresh erythrocytes. Prior to merozoite egress, cleaves MSRP2 converting it to MSRP2 p25 form, and RAP1 converting it to RAP1 p67 form. This is Subtilisin-like protease 1 from Plasmodium falciparum.